The sequence spans 197 residues: Beta-crystallin A2 (197 aa).

Positions 1–11 are N-terminal arm; the sequence is MSSAPAQGPAP. 2 Beta/gamma crystallin 'Greek key' domains span residues 12–52 and 53–99; these read ASLT…KVEN and GAWV…RPVL. Residues 100-105 form a connecting peptide region; that stretch reads CANHSD. Beta/gamma crystallin 'Greek key' domains follow at residues 106–147 and 148–196; these read SRVT…KVSS and GAWV…RRVQ.

This sequence belongs to the beta/gamma-crystallin family. Homo/heterodimer, or complexes of higher-order. The structure of beta-crystallin oligomers seems to be stabilized through interactions between the N-terminal arms.

Crystallins are the dominant structural components of the vertebrate eye lens. This is Beta-crystallin A2 (CRYBA2) from Bos taurus (Bovine).